The primary structure comprises 886 residues: Alanine--tRNA ligase (886 aa).

The Zn(2+) site is built by histidine 564, histidine 568, cysteine 666, and histidine 670.

It belongs to the class-II aminoacyl-tRNA synthetase family. Zn(2+) serves as cofactor.

The protein localises to the cytoplasm. It carries out the reaction tRNA(Ala) + L-alanine + ATP = L-alanyl-tRNA(Ala) + AMP + diphosphate. Catalyzes the attachment of alanine to tRNA(Ala) in a two-step reaction: alanine is first activated by ATP to form Ala-AMP and then transferred to the acceptor end of tRNA(Ala). Also edits incorrectly charged Ser-tRNA(Ala) and Gly-tRNA(Ala) via its editing domain. The protein is Alanine--tRNA ligase of Prochlorococcus marinus (strain MIT 9301).